The sequence spans 297 residues: tRNA dimethylallyltransferase (297 aa).

Position 8-15 (8-15 (GATASGKS)) interacts with ATP. 10 to 15 (TASGKS) provides a ligand contact to substrate. Residues 33–36 (DSLS) are interaction with substrate tRNA.

It belongs to the IPP transferase family. As to quaternary structure, monomer. Mg(2+) serves as cofactor.

It catalyses the reaction adenosine(37) in tRNA + dimethylallyl diphosphate = N(6)-dimethylallyladenosine(37) in tRNA + diphosphate. In terms of biological role, catalyzes the transfer of a dimethylallyl group onto the adenine at position 37 in tRNAs that read codons beginning with uridine, leading to the formation of N6-(dimethylallyl)adenosine (i(6)A). The polypeptide is tRNA dimethylallyltransferase (Sulfurimonas denitrificans (strain ATCC 33889 / DSM 1251) (Thiomicrospira denitrificans (strain ATCC 33889 / DSM 1251))).